The chain runs to 172 residues: Biogenesis of lysosome-related organelles complex 1 subunit 6 (172 aa).

Disordered regions lie at residues 1 to 36 and 135 to 172; these read MSVP…SPDE and RALK…AKRM. Residues 63–167 adopt a coiled-coil conformation; it reads DLQRSKQALQ…FEREKQLTAR (105 aa). The segment covering 143 to 164 has biased composition (basic and acidic residues); sequence RQKEELEREQQREKEFEREKQL.

The protein belongs to the BLOC1S6 family. As to quaternary structure, interacts with BLOC1S4 and DTNBP1/BLOC1S7. Homodimer. Component of the biogenesis of lysosome-related organelles complex 1 (BLOC-1) composed of BLOC1S1, BLOC1S2, BLOC1S3, BLOC1S4, BLOC1S5, BLOC1S6, DTNBP1/BLOC1S7 and SNAPIN/BLOC1S8. Octamer composed of one copy each BLOC1S1, BLOC1S2, BLOC1S3, BLOC1S4, BLOC1S5, BLOC1S6, DTNBP1/BLOC1S7 and SNAPIN/BLOC1S8. The BLOC-1 complex associates with the AP-3 protein complex and membrane protein cargos. Interacts with BLOC1S5, F-actin, SNAP25 isoform 1 and isoform 2, SNAP47 and STX12. Phosphorylated. In terms of tissue distribution, widely expressed.

It is found in the cytoplasm. Its subcellular location is the membrane. Its function is as follows. Component of the BLOC-1 complex, a complex that is required for normal biogenesis of lysosome-related organelles (LRO), such as platelet dense granules and melanosomes. In concert with the AP-3 complex, the BLOC-1 complex is required to target membrane protein cargos into vesicles assembled at cell bodies for delivery into neurites and nerve terminals. The BLOC-1 complex, in association with SNARE proteins, is also proposed to be involved in neurite extension. May play a role in intracellular vesicle trafficking, particularly in the vesicle-docking and fusion process. The chain is Biogenesis of lysosome-related organelles complex 1 subunit 6 (BLOC1S6) from Homo sapiens (Human).